The primary structure comprises 201 residues: Imidazoleglycerol-phosphate dehydratase (201 aa).

This sequence belongs to the imidazoleglycerol-phosphate dehydratase family.

It is found in the cytoplasm. The catalysed reaction is D-erythro-1-(imidazol-4-yl)glycerol 3-phosphate = 3-(imidazol-4-yl)-2-oxopropyl phosphate + H2O. It participates in amino-acid biosynthesis; L-histidine biosynthesis; L-histidine from 5-phospho-alpha-D-ribose 1-diphosphate: step 6/9. This Prochlorococcus marinus (strain AS9601) protein is Imidazoleglycerol-phosphate dehydratase.